We begin with the raw amino-acid sequence, 338 residues long: Taste receptor type 2 member 39 (338 aa).

Residues 1–30 are Extracellular-facing; it reads MLGRCFPPDTKEKQQLRMTKLCDPAESELS. Residues 31 to 51 form a helical membrane-spanning segment; sequence PFLITLILAVLLAEYLIGIIA. Over 52 to 74 the chain is Cytoplasmic; the sequence is NGFIMAIHAAEWVQNKAVSTSGR. Residues 75–95 form a helical membrane-spanning segment; it reads ILVFLSVSRIALQSLMMLEIT. Residues 96–116 lie on the Extracellular side of the membrane; the sequence is ISSTSLSFYSEDAVYYAFKIS. A helical transmembrane segment spans residues 117-137; sequence FIFLNFCSLWFAAWLSFFYFV. Over 138–156 the chain is Cytoplasmic; sequence KIANFSYPLFLKLRWRITG. Residues 157-177 form a helical membrane-spanning segment; the sequence is LIPWLLWLSVFISFSHSMFCI. The Extracellular segment spans residues 178 to 205; it reads NIXTVYCNNSFPIHSSNSTKKTYLSEIN. Asparagine 185 and asparagine 194 each carry an N-linked (GlcNAc...) asparagine glycan. A helical membrane pass occupies residues 206-226; sequence VVGLAFFFNLGIVTPLIMFIL. The Cytoplasmic segment spans residues 227-262; the sequence is TATLLILSLKRHTLHMGSNATGSNDPSMEAHMGAIK. A helical membrane pass occupies residues 263–283; that stretch reads ATSYFLILYIFNAVALFIYLS. Topologically, residues 284–291 are extracellular; it reads NMFDINSL. The helical transmembrane segment at 292–312 threads the bilayer; the sequence is WNNLCQIIMAAYPASHSILLI. The Cytoplasmic segment spans residues 313–338; it reads QDNPGLRRAWKRLQLRLHLYPKEWTL.

Belongs to the G-protein coupled receptor T2R family.

It is found in the membrane. Functionally, receptor that may play a role in the perception of bitterness and is gustducin-linked. May play a role in sensing the chemical composition of the gastrointestinal content. The activity of this receptor may stimulate alpha gustducin, mediate PLC-beta-2 activation and lead to the gating of TRPM5. The polypeptide is Taste receptor type 2 member 39 (TAS2R39) (Gorilla gorilla gorilla (Western lowland gorilla)).